Here is a 357-residue protein sequence, read N- to C-terminus: NADH-quinone oxidoreductase subunit H (357 aa).

Helical transmembrane passes span Trp20–Val40, Ile92–Val112, Leu127–Ala147, Val165–Leu185, Phe206–Val226, Ile268–Ile288, Ile294–Phe314, and Leu329–Met349.

The protein belongs to the complex I subunit 1 family. NDH-1 is composed of 14 different subunits. Subunits NuoA, H, J, K, L, M, N constitute the membrane sector of the complex.

The protein resides in the cell inner membrane. It carries out the reaction a quinone + NADH + 5 H(+)(in) = a quinol + NAD(+) + 4 H(+)(out). In terms of biological role, NDH-1 shuttles electrons from NADH, via FMN and iron-sulfur (Fe-S) centers, to quinones in the respiratory chain. The immediate electron acceptor for the enzyme in this species is believed to be ubiquinone. Couples the redox reaction to proton translocation (for every two electrons transferred, four hydrogen ions are translocated across the cytoplasmic membrane), and thus conserves the redox energy in a proton gradient. This subunit may bind ubiquinone. This Bordetella avium (strain 197N) protein is NADH-quinone oxidoreductase subunit H.